A 150-amino-acid polypeptide reads, in one-letter code: uncharacterized protein (150 aa).

3 helical membrane passes run L48 to F68, V89 to P109, and R123 to L143.

This sequence to M.pneumoniae MPN_085 central region.

Its subcellular location is the cell membrane. This is an uncharacterized protein from Mycoplasma pneumoniae (strain ATCC 29342 / M129 / Subtype 1) (Mycoplasmoides pneumoniae).